We begin with the raw amino-acid sequence, 454 residues long: MFIHPEEILETLKMVNNEHLDIRTVTMGISLRGCCHPDMATFNSNVYDRILRCAEKLVRTTEEIQSLYGMPIINRRISVTPIAIVAESCQADDYCSVAETLDRAARETGIDFIGGFSALVQKGMTPGDLKLIESIPRALAITEKVCSSVNLASTKAGINMDAVALMGRIIRETARLTADRGAIGCAKLVVFANAPEDNPFMAGAFHGVGEPDCVINVGVSGPGVVNAAVRGLQGSPTLGDIAECIKKTAFKITRMGEMVGREVARRLDAQFGVLDLSLAPTPAVGDSVAAILEAMGLESCGTHGTTAALALLNDAVKKGGSMASSNVGGLSGAFIPVSEDEGMIRAVKRGSLSLDKLEAMTCVCSVGLDMVAVPGDTPAATLSAIIADEMAIGMINKKTTAVRIIPAPGTVVGDVVEFGGLLGSAPVMAVHNFSAETFIGRGGRIPAPIQALTN.

The protein belongs to the UPF0210 family. As to quaternary structure, homodimer.

The protein is UPF0210 protein Ppro_0613 of Pelobacter propionicus (strain DSM 2379 / NBRC 103807 / OttBd1).